Consider the following 168-residue polypeptide: Small ribosomal subunit protein uS5 (168 aa).

In terms of domain architecture, S5 DRBM spans 13 to 76 (LKEQVVDIKR…EDAKKNLIHV (64 aa)).

Belongs to the universal ribosomal protein uS5 family. Part of the 30S ribosomal subunit. Contacts proteins S4 and S8.

In terms of biological role, with S4 and S12 plays an important role in translational accuracy. Its function is as follows. Located at the back of the 30S subunit body where it stabilizes the conformation of the head with respect to the body. The protein is Small ribosomal subunit protein uS5 of Alkaliphilus oremlandii (strain OhILAs) (Clostridium oremlandii (strain OhILAs)).